The chain runs to 338 residues: MADADKDRLVSGDVDDSNEAQIEKSLRPRMLAQYIGQDRVKHQLEVYITAAKQREESLDHVLLYGPPGLGKTTLALVIANELGVNIRTTSGPAIEKPGDLVALLNELHPGDVLFIDEIHRLPKIVEEMLYSAMEDFYIDIVVGQGPTAHPVHFPLPPFTLIGATTRAGMLSAPLRDRFGISEHMAYYSADDLSEIVKRSATIFDMAIDAEGAHEIARRSRGTPRVANRLLKRIRDFAEVAGQSPVDIQMVDHALDQLQVDQQGLDQIDRKLLMFMIRDYEGGPVGLSTIAANIGEEMATIEEMYEPYLLQIGYLKRTPRGRMVTPAGFAHMGMSAEQH.

Residues 4–187 (ADKDRLVSGD…FGISEHMAYY (184 aa)) are large ATPase domain (RuvB-L). ATP-binding positions include L26, R27, G68, K71, T72, T73, 134-136 (EDF), R177, Y187, and R224. T72 contributes to the Mg(2+) binding site. Residues 188 to 258 (SADDLSEIVK…MVDHALDQLQ (71 aa)) are small ATPAse domain (RuvB-S). The head domain (RuvB-H) stretch occupies residues 261 to 338 (QQGLDQIDRK…AHMGMSAEQH (78 aa)). 2 residues coordinate DNA: R316 and R321.

This sequence belongs to the RuvB family. As to quaternary structure, homohexamer. Forms an RuvA(8)-RuvB(12)-Holliday junction (HJ) complex. HJ DNA is sandwiched between 2 RuvA tetramers; dsDNA enters through RuvA and exits via RuvB. An RuvB hexamer assembles on each DNA strand where it exits the tetramer. Each RuvB hexamer is contacted by two RuvA subunits (via domain III) on 2 adjacent RuvB subunits; this complex drives branch migration. In the full resolvosome a probable DNA-RuvA(4)-RuvB(12)-RuvC(2) complex forms which resolves the HJ.

The protein localises to the cytoplasm. It carries out the reaction ATP + H2O = ADP + phosphate + H(+). Functionally, the RuvA-RuvB-RuvC complex processes Holliday junction (HJ) DNA during genetic recombination and DNA repair, while the RuvA-RuvB complex plays an important role in the rescue of blocked DNA replication forks via replication fork reversal (RFR). RuvA specifically binds to HJ cruciform DNA, conferring on it an open structure. The RuvB hexamer acts as an ATP-dependent pump, pulling dsDNA into and through the RuvAB complex. RuvB forms 2 homohexamers on either side of HJ DNA bound by 1 or 2 RuvA tetramers; 4 subunits per hexamer contact DNA at a time. Coordinated motions by a converter formed by DNA-disengaged RuvB subunits stimulates ATP hydrolysis and nucleotide exchange. Immobilization of the converter enables RuvB to convert the ATP-contained energy into a lever motion, pulling 2 nucleotides of DNA out of the RuvA tetramer per ATP hydrolyzed, thus driving DNA branch migration. The RuvB motors rotate together with the DNA substrate, which together with the progressing nucleotide cycle form the mechanistic basis for DNA recombination by continuous HJ branch migration. Branch migration allows RuvC to scan DNA until it finds its consensus sequence, where it cleaves and resolves cruciform DNA. The sequence is that of Holliday junction branch migration complex subunit RuvB from Lacticaseibacillus paracasei (strain ATCC 334 / BCRC 17002 / CCUG 31169 / CIP 107868 / KCTC 3260 / NRRL B-441) (Lactobacillus paracasei).